The sequence spans 185 residues: MSPARLRITDRTGDLFAAPANTLLIHACNTVGSWGGGIALAFRNLYPAEFRVYRAHCARSTPNQLVGTALLIAPQRASLNGSGGGGHYIGCLFTSRRFGAARDPPDRILRATGPAMRHLMRLVAEEEERTGVRIGEVRMCRINAGLFAVPWESSKRALEAMELGDGEVPGCAQGGVVEVVAWERA.

The Macro domain occupies 1–185 (MSPARLRITD…VVEVVAWERA (185 aa)). Substrate-binding positions include 13 to 15 (GDL), 27 to 29 (ACN), 34 to 39 (WGGGIA), and 142 to 148 (INAGLFA).

Belongs to the POA1 family.

The catalysed reaction is ADP-alpha-D-ribose 1''-phosphate + H2O = ADP-D-ribose + phosphate. Functionally, highly specific phosphatase involved in the metabolism of ADP-ribose 1''-phosphate (Appr1p) which is produced as a consequence of tRNA splicing. This is ADP-ribose 1''-phosphate phosphatase (POA1) from Chaetomium globosum (strain ATCC 6205 / CBS 148.51 / DSM 1962 / NBRC 6347 / NRRL 1970) (Soil fungus).